Here is a 570-residue protein sequence, read N- to C-terminus: L-ascorbate oxidase (570 aa).

An N-terminal signal peptide occupies residues 1–18 (MGMWWIVAVAILAHTASA). Plastocyanin-like domains follow at residues 33–140 (WPDC…IIDV) and 154–317 (FNLL…LNYV). 3 disulfides stabilise this stretch: Cys-36–Cys-219, Cys-98–Cys-557, and Cys-197–Cys-211. Cu cation is bound by residues His-77 and His-79. A glycan (N-linked (GlcNAc...) asparagine) is linked at Asn-109. Cu cation is bound by residues His-121 and His-123. Asn-196 carries N-linked (GlcNAc...) asparagine glycosylation. Residues Asn-229, Asn-343, Asn-384, Asn-407, Asn-434, Asn-442, and Asn-458 are each glycosylated (N-linked (GlcNAc...) asparagine). Residues 426 to 543 (RNRNAKQGNV…MGMGVVFAEG (118 aa)) form the Plastocyanin-like 3 domain. Residues His-463, His-466, His-468, His-525, Cys-526, His-527, His-531, and Met-536 each contribute to the Cu cation site.

It belongs to the multicopper oxidase family. In terms of assembly, dimer. The cofactor is Cu cation.

It is found in the secreted. It catalyses the reaction 4 L-ascorbate + O2 = 4 monodehydro-L-ascorbate radical + 2 H2O. The protein operates within cofactor degradation; L-ascorbate degradation. Functionally, ascorbate oxidase involved in a redox system involving ascorbic acid (AsA). The oxidation of AsA represses responses to high salinity and oxidative stress conditions such as vegetative growth and seed production reductions. Negative regulator of defense responses toward incompatible Turnip mosaic virus (TuMV strain UK1) by preventing jasmonic acid (JA)- dependent accumulation of ascorbic acid (AsA, AS) and dehydroascobic acid (DHA). In Brassica rapa subsp. pekinensis (Chinese cabbage), this protein is L-ascorbate oxidase.